We begin with the raw amino-acid sequence, 285 residues long: MMSDYTWFEGIPFPAFWFSKEILENSCKKFVVKEDDLIILTYPKSGTNWLIEIVCLIQTKGDPKWIQSMPIWDRSPWIETGSGYDKLTKMEGPRLMTSHLPMHLFSKSLFSSKAKVIYLIRNPRDVLVSAYFFWSKIALEKKPDSLGTYVEWFLKGNVAYGSWFEHIRGWLSMREWDNFLVLYYEDMKKDTMGSIKKICDFLGKKLEPDELNLVLKYSSFQVVKENNMSNYSLMEKELILTGFTFMRKGTTNDWKNHFTVAQAEAFDKVFQEKMAGFPPGMFPWE.

3'-phosphoadenylyl sulfate is bound by residues Lys-44, Ser-45, Gly-46, Thr-47, Asn-48, and Trp-49. The active-site Proton acceptor is His-99. 7 residues coordinate 3'-phosphoadenylyl sulfate: Arg-121, Ser-129, Tyr-184, Ser-218, Arg-247, Lys-248, and Gly-249.

The protein belongs to the sulfotransferase 1 family. In terms of tissue distribution, detected in liver.

It is found in the cytoplasm. The enzyme catalyses an alcohol + 3'-phosphoadenylyl sulfate = an alkyl sulfate + adenosine 3',5'-bisphosphate + H(+). Sulfotransferase that utilizes 3'-phospho-5'-adenylyl sulfate (PAPS) as sulfonate donor to catalyze the sulfate conjugation of a potential wide variety of acceptor molecules bearing a hydroxyl group. Sulfonation increases the water solubility of most compounds, and therefore their renal excretion, but it can also result in bioactivation to form active metabolites. This chain is Sulfotransferase 2A2, found in Rattus norvegicus (Rat).